The sequence spans 128 residues: Protein C10 (128 aa).

Belongs to the UPF0456 family.

It is found in the cytoplasm. In Xenopus laevis (African clawed frog), this protein is Protein C10.